A 202-amino-acid polypeptide reads, in one-letter code: IMP cyclohydrolase (202 aa).

It belongs to the archaeal IMP cyclohydrolase family.

It catalyses the reaction IMP + H2O = 5-formamido-1-(5-phospho-D-ribosyl)imidazole-4-carboxamide. Its pathway is purine metabolism; IMP biosynthesis via de novo pathway; IMP from 5-formamido-1-(5-phospho-D-ribosyl)imidazole-4-carboxamide: step 1/1. Its function is as follows. Catalyzes the cyclization of 5-formylamidoimidazole-4-carboxamide ribonucleotide to IMP. The chain is IMP cyclohydrolase (purO) from Methanocaldococcus jannaschii (strain ATCC 43067 / DSM 2661 / JAL-1 / JCM 10045 / NBRC 100440) (Methanococcus jannaschii).